The following is a 584-amino-acid chain: Pentalenolactone D synthase (584 aa).

FAD-binding positions include 55 to 56 (IG), 77 to 78 (DG), 85 to 86 (TW), 97 to 98 (DV), Tyr-103, Val-147, and Met-486.

This sequence belongs to the FAD-binding monooxygenase family. FAD is required as a cofactor.

It catalyses the reaction 1-deoxy-11-oxopentalenate + NADPH + O2 + H(+) = pentalenolactone D + NADP(+) + H2O. It functions in the pathway antibiotic biosynthesis; pentalenolactone biosynthesis. Catalyzes the flavin-dependent Baeyer-Villiger oxidation of 1-deoxy-11-oxopentalenic acid to pentalenolactone D in the biosynthesis of pentalenolactone antibiotic. This is Pentalenolactone D synthase (penE) from Streptomyces exfoliatus (Streptomyces hydrogenans).